The following is a 103-amino-acid chain: Cystatin-A8 (103 aa).

The disordered stretch occupies residues 1 to 20; sequence MESEEMLAGGLTEPRPATPE. Residues 51–55 carry the Secondary area of contact motif; the sequence is QVVAG.

The protein belongs to the cystatin family.

The protein resides in the cytoplasm. Its function is as follows. This is an intracellular thiol proteinase inhibitor. The chain is Cystatin-A8 from Sus scrofa (Pig).